Here is a 546-residue protein sequence, read N- to C-terminus: (-)-5-epieremophilene synthase STPS3 (546 aa).

Mg(2+) contacts are provided by Asp299, Asp303, Asp442, Thr446, and Glu450. A DDXXD motif motif is present at residues 299 to 303; that stretch reads DDTYD.

Belongs to the terpene synthase family. Tpsa subfamily. As to quaternary structure, monomer. It depends on Mg(2+) as a cofactor. Highly expressed in flowers and at lower levels in leaves.

The enzyme catalyses (2E,6E)-farnesyl diphosphate = (-)-5-epi-eremophilene + diphosphate. The protein operates within secondary metabolite biosynthesis; terpenoid biosynthesis. In terms of biological role, sesquiterpene synthase that catalyzes the conversion of farnesyl diphosphate to (-)-5-epi-eremophilene. The sequence is that of (-)-5-epieremophilene synthase STPS3 from Salvia miltiorrhiza (Chinese sage).